We begin with the raw amino-acid sequence, 261 residues long: Cytochrome c oxidase subunit 3 (261 aa).

Topologically, residues 1-15 (MAHQAHAYHMVDPSP) are mitochondrial matrix. A helical membrane pass occupies residues 16-34 (WPLTGAIAALLMTSGLAIW). At 35-40 (FHFHST) the chain is on the mitochondrial intermembrane side. Residues 41 to 66 (TLMTLGLILLLLTMYQWWRDIIREGT) form a helical membrane-spanning segment. The Mitochondrial matrix portion of the chain corresponds to 67–72 (FQGHHT). The chain crosses the membrane as a helical span at residues 73–105 (PPVQKGLRYGMILFITSEVFFFLGFFWAFYHSS). Over 106–128 (LAPTPELGGCWPPTGITPLDPFE) the chain is Mitochondrial intermembrane. The chain crosses the membrane as a helical span at residues 129–152 (VPLLNTAVLLASGVTVTWAHHSIM). Over 153-155 (EGE) the chain is Mitochondrial matrix. Residues 156–183 (RKQAIQSLALTILLGFYFTALQAMEYYE) traverse the membrane as a helical segment. At 184-190 (APFTIAD) the chain is on the mitochondrial intermembrane side. A helical transmembrane segment spans residues 191–223 (GVYGSTFFVATGFHGLHVIIGSTFLAVCLLRQI). The Mitochondrial matrix portion of the chain corresponds to 224-232 (QYHFTSEHH). The chain crosses the membrane as a helical span at residues 233-256 (FGFEAAAWYWHFVDVVWLFLYVSI). Residues 257-261 (YWWGS) lie on the Mitochondrial intermembrane side of the membrane.

It belongs to the cytochrome c oxidase subunit 3 family. In terms of assembly, component of the cytochrome c oxidase (complex IV, CIV), a multisubunit enzyme composed of 14 subunits. The complex is composed of a catalytic core of 3 subunits MT-CO1, MT-CO2 and MT-CO3, encoded in the mitochondrial DNA, and 11 supernumerary subunits COX4I, COX5A, COX5B, COX6A, COX6B, COX6C, COX7A, COX7B, COX7C, COX8 and NDUFA4, which are encoded in the nuclear genome. The complex exists as a monomer or a dimer and forms supercomplexes (SCs) in the inner mitochondrial membrane with NADH-ubiquinone oxidoreductase (complex I, CI) and ubiquinol-cytochrome c oxidoreductase (cytochrome b-c1 complex, complex III, CIII), resulting in different assemblies (supercomplex SCI(1)III(2)IV(1) and megacomplex MCI(2)III(2)IV(2)).

The protein resides in the mitochondrion inner membrane. It catalyses the reaction 4 Fe(II)-[cytochrome c] + O2 + 8 H(+)(in) = 4 Fe(III)-[cytochrome c] + 2 H2O + 4 H(+)(out). Its function is as follows. Component of the cytochrome c oxidase, the last enzyme in the mitochondrial electron transport chain which drives oxidative phosphorylation. The respiratory chain contains 3 multisubunit complexes succinate dehydrogenase (complex II, CII), ubiquinol-cytochrome c oxidoreductase (cytochrome b-c1 complex, complex III, CIII) and cytochrome c oxidase (complex IV, CIV), that cooperate to transfer electrons derived from NADH and succinate to molecular oxygen, creating an electrochemical gradient over the inner membrane that drives transmembrane transport and the ATP synthase. Cytochrome c oxidase is the component of the respiratory chain that catalyzes the reduction of oxygen to water. Electrons originating from reduced cytochrome c in the intermembrane space (IMS) are transferred via the dinuclear copper A center (CU(A)) of subunit 2 and heme A of subunit 1 to the active site in subunit 1, a binuclear center (BNC) formed by heme A3 and copper B (CU(B)). The BNC reduces molecular oxygen to 2 water molecules using 4 electrons from cytochrome c in the IMS and 4 protons from the mitochondrial matrix. The polypeptide is Cytochrome c oxidase subunit 3 (mt-co3) (Carassius auratus (Goldfish)).